The following is a 274-amino-acid chain: Nitrogenase iron protein (274 aa).

ATP is bound at residue 8–15 (GKGGIGKS). A [4Fe-4S] cluster-binding site is contributed by Cys94. Arg97 carries the post-translational modification ADP-ribosylarginine; by dinitrogenase reductase ADP-ribosyltransferase. Cys131 lines the [4Fe-4S] cluster pocket.

The protein belongs to the NifH/BchL/ChlL family. Homodimer. The cofactor is [4Fe-4S] cluster. In terms of processing, the reversible ADP-ribosylation of Arg-97 inactivates the nitrogenase reductase and regulates nitrogenase activity.

It carries out the reaction N2 + 8 reduced [2Fe-2S]-[ferredoxin] + 16 ATP + 16 H2O = H2 + 8 oxidized [2Fe-2S]-[ferredoxin] + 2 NH4(+) + 16 ADP + 16 phosphate + 6 H(+). Functionally, the key enzymatic reactions in nitrogen fixation are catalyzed by the nitrogenase complex, which has 2 components: the iron protein and the molybdenum-iron protein. This Chlorobium phaeobacteroides (strain DSM 266 / SMG 266 / 2430) protein is Nitrogenase iron protein.